Reading from the N-terminus, the 293-residue chain is Probable endonuclease 4 (293 aa).

His-77, His-118, Glu-153, Asp-187, His-190, His-221, Asp-234, His-236, and Glu-266 together coordinate Zn(2+).

Belongs to the AP endonuclease 2 family. Requires Zn(2+) as cofactor.

It catalyses the reaction Endonucleolytic cleavage to 5'-phosphooligonucleotide end-products.. In terms of biological role, endonuclease IV plays a role in DNA repair. It cleaves phosphodiester bonds at apurinic or apyrimidinic (AP) sites, generating a 3'-hydroxyl group and a 5'-terminal sugar phosphate. In Mesoplasma florum (strain ATCC 33453 / NBRC 100688 / NCTC 11704 / L1) (Acholeplasma florum), this protein is Probable endonuclease 4.